A 239-amino-acid polypeptide reads, in one-letter code: Inner kinetochore subunit MCM22 (239 aa).

Belongs to the CENP-K/MCM22 family. As to quaternary structure, component of the heterotrimeric kinetochore subcomplex CTF3, which consists of CTF3, MCM16 and MCM22. The CTF3 subcomplex is part of a larger constitutive centromere-associated network (CCAN) (also known as central kinetochore CTF19 complex in yeast), which is composed of at least AME1, CHL4, CNN1, CTF3, CTF19, IML3, MCM16, MCM21, MCM22, MHF1, MHF2, MIF2, NKP1, NKP2, OKP1 and WIP1. Interacts with CTF19.

The protein localises to the nucleus. It is found in the chromosome. The protein resides in the centromere. Its subcellular location is the kinetochore. Functionally, component of the kinetochore, a multiprotein complex that assembles on centromeric DNA and attaches chromosomes to spindle microtubules, mediating chromosome segregation and sister chromatid segregation during meiosis and mitosis. Component of the inner kinetochore constitutive centromere-associated network (CCAN), which serves as a structural platform for outer kinetochore assembly. The chain is Inner kinetochore subunit MCM22 (MCM22) from Saccharomyces cerevisiae (strain ATCC 204508 / S288c) (Baker's yeast).